The chain runs to 367 residues: tRNA-specific 2-thiouridylase MnmA (367 aa).

Residues 13–20 (GLSGGVDS) and M39 contribute to the ATP site. The segment at 99–101 (NPD) is interaction with target base in tRNA. The Nucleophile role is filled by C104. C104 and C200 are joined by a disulfide. G128 is a binding site for ATP. The interval 150 to 152 (KDQ) is interaction with tRNA. Residue C200 is the Cysteine persulfide intermediate of the active site. Positions 307–308 (RY) are interaction with tRNA.

Belongs to the MnmA/TRMU family.

Its subcellular location is the cytoplasm. The enzyme catalyses S-sulfanyl-L-cysteinyl-[protein] + uridine(34) in tRNA + AH2 + ATP = 2-thiouridine(34) in tRNA + L-cysteinyl-[protein] + A + AMP + diphosphate + H(+). Its function is as follows. Catalyzes the 2-thiolation of uridine at the wobble position (U34) of tRNA, leading to the formation of s(2)U34. This Neisseria meningitidis serogroup C / serotype 2a (strain ATCC 700532 / DSM 15464 / FAM18) protein is tRNA-specific 2-thiouridylase MnmA.